The chain runs to 501 residues: Cobyric acid synthase (501 aa).

A GATase cobBQ-type domain is found at 253-450; sequence EIEIAVLKLP…LHGIFENGRW (198 aa). C334 acts as the Nucleophile in catalysis. The active site involves H442.

Belongs to the CobB/CobQ family. CobQ subfamily.

Its pathway is cofactor biosynthesis; adenosylcobalamin biosynthesis. In terms of biological role, catalyzes amidations at positions B, D, E, and G on adenosylcobyrinic A,C-diamide. NH(2) groups are provided by glutamine, and one molecule of ATP is hydrogenolyzed for each amidation. This Prochlorococcus marinus (strain MIT 9313) protein is Cobyric acid synthase.